The chain runs to 61 residues: Small ribosomal subunit protein uS14 (61 aa).

Zn(2+)-binding residues include C24, C27, C40, and C43.

Belongs to the universal ribosomal protein uS14 family. Zinc-binding uS14 subfamily. As to quaternary structure, part of the 30S ribosomal subunit. Contacts proteins S3 and S10. Zn(2+) is required as a cofactor.

Its function is as follows. Binds 16S rRNA, required for the assembly of 30S particles and may also be responsible for determining the conformation of the 16S rRNA at the A site. This Mycoplasma pneumoniae (strain ATCC 29342 / M129 / Subtype 1) (Mycoplasmoides pneumoniae) protein is Small ribosomal subunit protein uS14.